We begin with the raw amino-acid sequence, 693 residues long: Golgin subfamily A member 6B (693 aa).

Residues M1–P11 are compositionally biased toward pro residues. 4 disordered regions span residues M1–Q72, L497–R551, N629–Q650, and N660–T679. Positions A77–L611 form a coiled coil. Positions L537 to R551 are enriched in basic and acidic residues.

It belongs to the GOLGA6 family.

In Homo sapiens (Human), this protein is Golgin subfamily A member 6B (GOLGA6B).